We begin with the raw amino-acid sequence, 338 residues long: MQVYYDKDCDLSIIQGKKVAILGFGSQGHAHACNLKDSGVDVVVGLRAGSSSIAKAEAYGLKTSDVASAVASADVVMVLTPDEFQAQLYREEIEPNLKQGATLAFAHGFAIHYNQIVPRKDLDVIMVAPKAPGHTVRTEFTKGGGIPDLIAIFQDASGNAKNVALSYASGIGGGRTGIIETTFKDETETDLFGEQAVLCGGAVELVKAGFETLTEAGYAPEMAYFECLHELKLIVDLMYEGGIANMNYSISNNAEYGEYVTGPEVINEQSREAMRNALKRIQSGEYAKMFISEGALNYPSMTARRRQNAAHEIETVGEKLRSMMPWISANKIVDKDKN.

Residues 1-181 enclose the KARI N-terminal Rossmann domain; that stretch reads MQVYYDKDCD…GGGRTGIIET (181 aa). Residues 24–27, arginine 47, serine 50, serine 52, and 82–85 contribute to the NADP(+) site; these read FGSQ and DEFQ. Residue histidine 107 is part of the active site. Glycine 133 is an NADP(+) binding site. Residues 182 to 327 form the KARI C-terminal knotted domain; that stretch reads TFKDETETDL…EKLRSMMPWI (146 aa). Residues aspartate 190, glutamate 194, glutamate 226, and glutamate 230 each contribute to the Mg(2+) site. Position 251 (serine 251) interacts with substrate.

Belongs to the ketol-acid reductoisomerase family. The cofactor is Mg(2+).

The catalysed reaction is (2R)-2,3-dihydroxy-3-methylbutanoate + NADP(+) = (2S)-2-acetolactate + NADPH + H(+). It carries out the reaction (2R,3R)-2,3-dihydroxy-3-methylpentanoate + NADP(+) = (S)-2-ethyl-2-hydroxy-3-oxobutanoate + NADPH + H(+). The protein operates within amino-acid biosynthesis; L-isoleucine biosynthesis; L-isoleucine from 2-oxobutanoate: step 2/4. It participates in amino-acid biosynthesis; L-valine biosynthesis; L-valine from pyruvate: step 2/4. In terms of biological role, involved in the biosynthesis of branched-chain amino acids (BCAA). Catalyzes an alkyl-migration followed by a ketol-acid reduction of (S)-2-acetolactate (S2AL) to yield (R)-2,3-dihydroxy-isovalerate. In the isomerase reaction, S2AL is rearranged via a Mg-dependent methyl migration to produce 3-hydroxy-3-methyl-2-ketobutyrate (HMKB). In the reductase reaction, this 2-ketoacid undergoes a metal-dependent reduction by NADPH to yield (R)-2,3-dihydroxy-isovalerate. The protein is Ketol-acid reductoisomerase (NADP(+)) of Marinobacter nauticus (strain ATCC 700491 / DSM 11845 / VT8) (Marinobacter aquaeolei).